The chain runs to 209 residues: Uracil phosphoribosyltransferase (209 aa).

5-phospho-alpha-D-ribose 1-diphosphate-binding positions include Arg79, Arg104, and 131 to 139 (DPMLATGHT). Uracil-binding positions include Ile194 and 199–201 (GDA). Asp200 contributes to the 5-phospho-alpha-D-ribose 1-diphosphate binding site.

It belongs to the UPRTase family. Mg(2+) is required as a cofactor.

The enzyme catalyses UMP + diphosphate = 5-phospho-alpha-D-ribose 1-diphosphate + uracil. It functions in the pathway pyrimidine metabolism; UMP biosynthesis via salvage pathway; UMP from uracil: step 1/1. With respect to regulation, allosterically activated by GTP. In terms of biological role, catalyzes the conversion of uracil and 5-phospho-alpha-D-ribose 1-diphosphate (PRPP) to UMP and diphosphate. This Caulobacter sp. (strain K31) protein is Uracil phosphoribosyltransferase.